The primary structure comprises 1310 residues: Adhesion G protein-coupled receptor A3 (1310 aa).

Residues 1-27 form the signal peptide; that stretch reads MEPPPPLLLLPLALLALLWGGERGAAA. Residues 28-70 enclose the LRRNT domain; the sequence is LPAGCKHDGRARGTGRAAAAAEGKVVCSSLELAQVLPPDTLPN. Topologically, residues 28-747 are extracellular; it reads LPAGCKHDGR…TELYTPAASL (720 aa). N-linked (GlcNAc...) asparagine glycans are attached at residues asparagine 70 and asparagine 87. 4 LRR repeats span residues 71–92, 95–116, 119–140, and 143–164; these read RTVT…SFSG, LLER…AFWG, SLKR…VFRG, and NLVR…TFDY. N-linked (GlcNAc...) asparagine glycans are attached at residues asparagine 148, asparagine 195, asparagine 290, asparagine 321, asparagine 422, asparagine 442, asparagine 581, asparagine 641, asparagine 676, and asparagine 717. An LRRCT domain is found at 176 to 226; that stretch reads EYLLCDCNILWMHRWVKERNITVRDTRCVYPKSLQAQPVTGVKQELLTCDP. The 99-residue stretch at 231 to 329 folds into the Ig-like domain; sequence PSFYMTPSHR…GNNTRTVDIV (99 aa). The cysteines at positions 253 and 313 are disulfide-linked. A GAIN-B domain is found at 572-739; it reads LDKQLSFKCN…AVLMDLTGTE (168 aa). Residues 690–739 are GPS; it reads AAQWDFDLLNGQGGWKSDGCCILYSDENITTIQCGSLGNYAVLMDLTGTE. A disulfide bond links cysteine 709 and cysteine 723. Residues 748–768 traverse the membrane as a helical segment; that stretch reads LHPVVYTTAITLLLCLLAVII. Residues 769 to 785 are Cytoplasmic-facing; that stretch reads SYMYHHSLIRISLKSWH. A helical transmembrane segment spans residues 786–806; sequence MLVNLCFHILLTCVVFVGGIT. The Extracellular segment spans residues 807–815; that stretch reads QTRNASVCQ. N-linked (GlcNAc...) asparagine glycosylation is present at asparagine 810. A helical transmembrane segment spans residues 816–836; it reads AVGIILHYSTLATVLWVGVTA. The Cytoplasmic segment spans residues 837-865; it reads RNIYKQVTKKAKRCQDPDEPPAPPRPMLR. The helical transmembrane segment at 866 to 886 threads the bilayer; the sequence is FYLIGGGIPIIVCGITAAANI. Residues 887 to 908 are Extracellular-facing; sequence KNYGSRPSAPYCWMAWEPSLGA. The helical transmembrane segment at 909–929 threads the bilayer; that stretch reads FYGPASFITFVNCMYFLSIFI. The Cytoplasmic segment spans residues 930–985; sequence QLKRHPERKYELKEPTEEQQRLAANENGEINHQDSMSLSLISTSTLENEHSFQSQL. The chain crosses the membrane as a helical span at residues 986–1006; the sequence is LGASLTLLLYVILWMFGAMAV. Over 1007 to 1013 the chain is Extracellular; it reads SLYYPLD. Residues 1014–1034 traverse the membrane as a helical segment; sequence LVFSFFFGATCLSFSAFMMVH. At 1035 to 1310 the chain is on the cytoplasmic side; that stretch reads HCINREDVRL…TGLWKHETTV (276 aa). 3 disordered regions span residues 1065-1084, 1187-1208, and 1221-1264; these read PPNS…SSAE, VEGS…GHSR, and YNPP…ADLE. Residues 1222–1239 are compositionally biased toward polar residues; that stretch reads NPPQQDSSDACSTLPKSS. The PDZ-binding signature appears at 1308–1310; that stretch reads TTV.

It belongs to the G-protein coupled receptor 2 family. Adhesion G-protein coupled receptor (ADGR) subfamily. Interacts (via PDZ-binding motif) with DLG1. In terms of tissue distribution, expressed by spermatogonial progenitor cells located within the outer cell layer of the seminiferous tubule and by multipotent adult spermatogonial-derived stem cells.

It localises to the membrane. Orphan receptor that may have a role in planar cell polarity pathway. The polypeptide is Adhesion G protein-coupled receptor A3 (Adgra3) (Mus musculus (Mouse)).